The primary structure comprises 116 residues: Small ribosomal subunit protein eS24 (116 aa).

The tract at residues 81 to 116 is disordered; it reads IEPEHMVERHKKVLEELESESEESEESESEESEEEE. Positions 96-116 are enriched in acidic residues; it reads ELESESEESEESESEESEEEE.

Belongs to the eukaryotic ribosomal protein eS24 family.

The sequence is that of Small ribosomal subunit protein eS24 from Methanopyrus kandleri (strain AV19 / DSM 6324 / JCM 9639 / NBRC 100938).